A 1163-amino-acid chain; its full sequence is DNA-directed RNA polymerase subunit beta' (1163 aa).

Zn(2+) is bound by residues Cys-59, Cys-61, Cys-74, and Cys-77. Residues Asp-449, Asp-451, and Asp-453 each contribute to the Mg(2+) site. Residues Cys-794, Cys-868, Cys-875, and Cys-878 each contribute to the Zn(2+) site.

This sequence belongs to the RNA polymerase beta' chain family. As to quaternary structure, the RNAP catalytic core consists of 2 alpha, 1 beta, 1 beta' and 1 omega subunit. When a sigma factor is associated with the core the holoenzyme is formed, which can initiate transcription. Mg(2+) is required as a cofactor. Zn(2+) serves as cofactor.

It carries out the reaction RNA(n) + a ribonucleoside 5'-triphosphate = RNA(n+1) + diphosphate. Its function is as follows. DNA-dependent RNA polymerase catalyzes the transcription of DNA into RNA using the four ribonucleoside triphosphates as substrates. This chain is DNA-directed RNA polymerase subunit beta', found in Caldicellulosiruptor saccharolyticus (strain ATCC 43494 / DSM 8903 / Tp8T 6331).